A 362-amino-acid chain; its full sequence is 3-dehydroquinate synthase (362 aa).

NAD(+)-binding positions include 74-79 (DGEGYK), 108-112 (GVIGD), 132-133 (TT), K145, K154, and 172-175 (TLDT). 3 residues coordinate Zn(2+): E187, H250, and H267.

The protein belongs to the sugar phosphate cyclases superfamily. Dehydroquinate synthase family. Co(2+) serves as cofactor. It depends on Zn(2+) as a cofactor. Requires NAD(+) as cofactor.

The protein resides in the cytoplasm. It carries out the reaction 7-phospho-2-dehydro-3-deoxy-D-arabino-heptonate = 3-dehydroquinate + phosphate. Its pathway is metabolic intermediate biosynthesis; chorismate biosynthesis; chorismate from D-erythrose 4-phosphate and phosphoenolpyruvate: step 2/7. Functionally, catalyzes the conversion of 3-deoxy-D-arabino-heptulosonate 7-phosphate (DAHP) to dehydroquinate (DHQ). The chain is 3-dehydroquinate synthase from Geobacter sp. (strain M21).